Reading from the N-terminus, the 207-residue chain is Keratin-associated protein 27-1 (207 aa).

The disordered stretch occupies residues 184–207 (QLLESSPGVEPTCCVTGGSQLPSK).

The protein belongs to the PMG family. As to quaternary structure, interacts with hair keratins.

In terms of biological role, in the hair cortex, hair keratin intermediate filaments are embedded in an interfilamentous matrix, consisting of hair keratin-associated proteins (KRTAP), which are essential for the formation of a rigid and resistant hair shaft through their extensive disulfide bond cross-linking with abundant cysteine residues of hair keratins. The matrix proteins include the high-sulfur and high-glycine-tyrosine keratins. In Homo sapiens (Human), this protein is Keratin-associated protein 27-1 (KRTAP27-1).